A 579-amino-acid polypeptide reads, in one-letter code: Peptidyl-prolyl cis-trans isomerase-like 2 (579 aa).

The region spanning 42–115 is the U-box domain; it reads RRLPFNFCSL…GEYVDPVTYK (74 aa). Positions 227–261 are disordered; the sequence is AERAQRAESGAASKGLTKPGMSATAASQKTVSHQA. The span at 250–259 shows a compositional bias: polar residues; it reads TAASQKTVSH. Positions 311-470 constitute a PPIase cyclophilin-type domain; the sequence is QKGYARISTT…PDIRIKDVTI (160 aa). The segment at 555–579 is disordered; the sequence is EGPEPEPAKKKFKGGGGFGDFSSWD.

It belongs to the cyclophilin-type PPIase family. PPIL2 subfamily.

The protein localises to the nucleus. It catalyses the reaction [protein]-peptidylproline (omega=180) = [protein]-peptidylproline (omega=0). The enzyme catalyses S-ubiquitinyl-[E2 ubiquitin-conjugating enzyme]-L-cysteine + [acceptor protein]-L-lysine = [E2 ubiquitin-conjugating enzyme]-L-cysteine + N(6)-ubiquitinyl-[acceptor protein]-L-lysine.. It participates in protein modification; protein ubiquitination. May catalyze the cis-trans isomerization of proline imidic peptide bonds in oligopeptides thereby assisting the folding of proteins. May also function as a chaperone, playing a role in intracellular transport of proteins. May also have a protein ubiquitin ligase activity acting as an E3 ubiquitin protein ligase or as a ubiquitin-ubiquitin ligase promoting elongation of ubiquitin chains on proteins. This Aspergillus fumigatus (strain ATCC MYA-4609 / CBS 101355 / FGSC A1100 / Af293) (Neosartorya fumigata) protein is Peptidyl-prolyl cis-trans isomerase-like 2 (cyp8).